The sequence spans 792 residues: DEAD-box ATP-dependent RNA helicase 40 (792 aa).

Over residues 1-16 (MSAGTAPAAPRYAPDD) the composition is skewed to low complexity. Disordered regions lie at residues 1-25 (MSAG…PWRG) and 44-118 (TQYE…PLPA). One can recognise a WW domain in the interval 17–51 (PSLPKPWRGLVDGTTGYLYYWNPETNITQYEKPLP). Positions 52–68 (PEDQLPPPPPLPPPPPR) are enriched in pro residues. Composition is skewed to basic and acidic residues over residues 70 to 80 (GRGDRDRDRRD) and 88 to 108 (PRRD…DHRS). The Q motif signature appears at 150-178 (TSFETGGFPPEILKEIQRAGFSSPTPIQA). Residues 181–355 (WPIALQCQDV…EDLLVHPVQV (175 aa)) enclose the Helicase ATP-binding domain. Residue 194-201 (AKTGSGKT) participates in ATP binding. The short motif at 303–306 (DEAD) is the DEAD box element. A Helicase C-terminal domain is found at 384–528 (RLEQILRSQD…RVPRDLADMA (145 aa)). The segment at 523–792 (DLADMASRGG…NATVQNGGDN (270 aa)) is disordered. Basic and acidic residues-rich tracts occupy residues 543-560 (TRSD…RYGG) and 572-588 (DSSR…DGRS). Basic residues-rich tracts occupy residues 589–599 (RRSGRGRSRSR) and 609–654 (RSPK…RRHE). Basic and acidic residues predominate over residues 668-708 (GHGERKRTPEADPSRNHTNHSDPKDDRHPEDGKVGKVDLDR). Positions 725–739 (GKTSRSVSPGNQVEG) are enriched in polar residues. Acidic residues predominate over residues 764 to 777 (DEEEGMIDEDGEIA).

It belongs to the DEAD box helicase family. DDX5/DBP2 subfamily.

It is found in the nucleus. The catalysed reaction is ATP + H2O = ADP + phosphate + H(+). Its function is as follows. ATP-dependent RNA helicase involved nonsense-mediated mRNA decay and ribosome biogenesis through rRNA processing. This chain is DEAD-box ATP-dependent RNA helicase 40, found in Oryza sativa subsp. japonica (Rice).